The primary structure comprises 283 residues: Bifunctional protein FolD 2 (283 aa).

Residues 165-167 (GAS), S190, and I231 each bind NADP(+).

This sequence belongs to the tetrahydrofolate dehydrogenase/cyclohydrolase family. As to quaternary structure, homodimer.

The enzyme catalyses (6R)-5,10-methylene-5,6,7,8-tetrahydrofolate + NADP(+) = (6R)-5,10-methenyltetrahydrofolate + NADPH. It carries out the reaction (6R)-5,10-methenyltetrahydrofolate + H2O = (6R)-10-formyltetrahydrofolate + H(+). It participates in one-carbon metabolism; tetrahydrofolate interconversion. Its function is as follows. Catalyzes the oxidation of 5,10-methylenetetrahydrofolate to 5,10-methenyltetrahydrofolate and then the hydrolysis of 5,10-methenyltetrahydrofolate to 10-formyltetrahydrofolate. This is Bifunctional protein FolD 2 from Bordetella pertussis (strain Tohama I / ATCC BAA-589 / NCTC 13251).